We begin with the raw amino-acid sequence, 501 residues long: MVLWGPVLGVLLVAIVGYLCLQGLLRQRRPEEPPLDKGSVPWLGHAMTFRKNMLEFLKHMWARHGDIFTVQLGGQYFTFVMDPLSFGPILKDAKRKLDFVEYAEKLVLKVFGYRSMQGDHRMIHSASTKHLMGDGLEELNKAMLDNLSLVMLGPKGPSPDASCWREDGLFHFCYDILFKAGYLSLFGRTEDKEQDLLQAEELFMQFRKFDRMFPRFVYSLLGPREWLEVGRLQCLFHKMLSVEHSLERHGISSWITDMLQVLREQGVAPAMQDKFNFMMLWASQGNTGPTTFWALLFLLKHPEAMRAVREEATRVLGEARLEDKQSFDVEVSALNHMPVLDSVMEETLRLGAAPTLLRVVNSDQILKMASGQEYRLRHGDILALFPYLSVHMDPDIHPEPTTFKYDRFLTPSGSRKVNFYKAGKKIHHYTMPWGSGISICPGRFFALTEMKLFVLLMVTHFDLELVDPDTPVPPVDPQRWGFGTMQPSYEVRFRYRLRPTE.

A helical membrane pass occupies residues 1–21 (MVLWGPVLGVLLVAIVGYLCL). Phosphoserine is present on serine 326. Cysteine 440 provides a ligand contact to heme.

This sequence belongs to the cytochrome P450 family. Heme serves as cofactor.

It localises to the endoplasmic reticulum membrane. The protein localises to the microsome membrane. The enzyme catalyses 7alpha-hydroxycholest-4-en-3-one + reduced [NADPH--hemoprotein reductase] + O2 = 7alpha,12alpha-dihydroxycholest-4-en-3-one + oxidized [NADPH--hemoprotein reductase] + H2O + H(+). The catalysed reaction is 5beta-cholestane-3alpha,7alpha-diol + reduced [NADPH--hemoprotein reductase] + O2 = 5beta-cholestane-3alpha,7alpha,12alpha-triol + oxidized [NADPH--hemoprotein reductase] + H2O + H(+). It catalyses the reaction chenodeoxycholate + reduced [NADPH--hemoprotein reductase] + O2 = cholate + oxidized [NADPH--hemoprotein reductase] + H2O + H(+). It participates in lipid metabolism; bile acid biosynthesis. Its function is as follows. A cytochrome P450 monooxygenase involved in primary bile acid biosynthesis. Catalyzes the 12alpha-hydroxylation of 7alpha-hydroxy-4-cholesten-3-one, an intermediate metabolite in cholic acid biosynthesis. Controls biliary balance of cholic acid and chenodeoxycholic acid, ultimately regulating the intestinal absorption of dietary lipids. Mechanistically, uses molecular oxygen inserting one oxygen atom into a substrate, and reducing the second into a water molecule, with two electrons provided by NADPH via cytochrome P450 reductase (CPR; NADPH--hemoprotein reductase). This chain is 5-beta-cholestane-3-alpha,7-alpha-diol 12-alpha-hydroxylase (CYP8B1), found in Sus scrofa (Pig).